The chain runs to 104 residues: Protein RnfH (104 aa).

It belongs to the UPF0125 (RnfH) family.

The polypeptide is Protein RnfH (Pseudomonas savastanoi pv. phaseolicola (strain 1448A / Race 6) (Pseudomonas syringae pv. phaseolicola (strain 1448A / Race 6))).